A 62-amino-acid chain; its full sequence is Photosystem II reaction center protein Z (62 aa).

Transmembrane regions (helical) follow at residues 8 to 28 (AVFA…VVFA) and 41 to 61 (FSGT…NSLI).

It belongs to the PsbZ family. As to quaternary structure, PSII is composed of 1 copy each of membrane proteins PsbA, PsbB, PsbC, PsbD, PsbE, PsbF, PsbH, PsbI, PsbJ, PsbK, PsbL, PsbM, PsbT, PsbY, PsbZ, Psb30/Ycf12, at least 3 peripheral proteins of the oxygen-evolving complex and a large number of cofactors. It forms dimeric complexes.

It localises to the plastid. It is found in the chloroplast thylakoid membrane. Functionally, may control the interaction of photosystem II (PSII) cores with the light-harvesting antenna, regulates electron flow through the 2 photosystem reaction centers. PSII is a light-driven water plastoquinone oxidoreductase, using light energy to abstract electrons from H(2)O, generating a proton gradient subsequently used for ATP formation. This Nymphaea alba (White water-lily) protein is Photosystem II reaction center protein Z.